The sequence spans 606 residues: Methionine--tRNA ligase (606 aa).

A 'HIGH' region motif is present at residues 14 to 24 (PYANGPRHIGH). The Zn(2+) site is built by Cys-146, Cys-149, Cys-159, and Cys-162. Residues 351-355 (KFSSS) carry the 'KMSKS' region motif. Ser-354 is an ATP binding site.

This sequence belongs to the class-I aminoacyl-tRNA synthetase family. MetG type 1 subfamily. In terms of assembly, monomer. It depends on Zn(2+) as a cofactor.

Its subcellular location is the cytoplasm. The catalysed reaction is tRNA(Met) + L-methionine + ATP = L-methionyl-tRNA(Met) + AMP + diphosphate. Is required not only for elongation of protein synthesis but also for the initiation of all mRNA translation through initiator tRNA(fMet) aminoacylation. This is Methionine--tRNA ligase from Thermobifida fusca (strain YX).